A 1978-amino-acid chain; its full sequence is Sodium channel protein type 8 subunit alpha (1978 aa).

Disordered regions lie at residues 1–20 (MAAR…FTPE) and 28–62 (RIAE…LEAG). At 1–132 (MAARVLAPPG…RIAIKILIHS (132 aa)) the chain is on the cytoplasmic side. Basic and acidic residues predominate over residues 28–61 (RIAESKLKKPPKADGSHREDDEDSKPKPNSDLEA). Residues 114–442 (ILSPFNLIRR…KAMLEQLKKQ (329 aa)) form an I repeat. The helical transmembrane segment at 133–151 (VFSMIIMCTILTNCVFMTF) threads the bilayer. The Extracellular segment spans residues 152–158 (SNPPEWS). Residues 159–179 (KNVEYTFTGIYTFESLVKIIA) traverse the membrane as a helical segment. Residues 180–193 (RGFCIDGFTFLRDP) lie on the Cytoplasmic side of the membrane. The chain crosses the membrane as a helical span at residues 194-211 (WNWLDFSVIMMAYVTEFV). At 212–217 (DLGNVS) the chain is on the extracellular side. A glycan (N-linked (GlcNAc...) asparagine) is linked at asparagine 215. The helical transmembrane segment at 218–234 (ALRTFRVLRALKTISVI) threads the bilayer. The Cytoplasmic portion of the chain corresponds to 235–253 (PGLKTIVGALIQSVKKLSD). Residues 254-273 (VMILTVFCLSVFALIGLQLF) form a helical membrane-spanning segment. The Extracellular segment spans residues 274–355 (MGNLRNKCVV…PNYGYTSFDT (82 aa)). A disulfide bond links cysteine 281 and cysteine 333. Asparagine 289, asparagine 295, asparagine 308, and asparagine 326 each carry an N-linked (GlcNAc...) asparagine glycan. Positions 356–380 (FSWAFLALFRLMTQDYWENLYQLTL) form an intramembrane region, pore-forming. Residue glutamate 373 participates in Na(+) binding. The Extracellular segment spans residues 381–387 (RAAGKTY). Residues 388–408 (MIFFVLVIFVGSFYLVNLILA) form a helical membrane-spanning segment. Over 409-751 (VVAMAYEEQN…EIVNLIVMDP (343 aa)) the chain is Cytoplasmic. 2 disordered regions span residues 446–530 (AQAA…KAFR) and 576–597 (DPGS…SEGR). The segment covering 473–486 (SPRSSSELSKLSSK) has biased composition (low complexity). The span at 489 to 500 (KERRNRRKKRKQ) shows a compositional bias: basic residues. Composition is skewed to basic and acidic residues over residues 501 to 530 (KELS…KAFR) and 586 to 597 (DEHSTVEESEGR). Serine 518 and serine 520 each carry phosphoserine. The II repeat unit spans residues 733-1005 (CHPYWIKLKE…QISVIRIKKG (273 aa)). Residues 752 to 770 (FVDLAITICIVLNTLFMAM) form a helical membrane-spanning segment. Over 771 to 781 (EHHPMTPQFEH) the chain is Extracellular. Residues 782-801 (VLAVGNLVFTGIFTAEMFLK) form a helical membrane-spanning segment. Topologically, residues 802-815 (LIAMDPYYYFQEGW) are cytoplasmic. The helical transmembrane segment at 816–835 (NIFDGFIVSLSLMELGLADV) threads the bilayer. Topologically, residues 836 to 837 (EG) are extracellular. A helical membrane pass occupies residues 838–855 (LSVLRSFRLLRVFKLAKS). The Cytoplasmic segment spans residues 856–871 (WPTLNMLIKIIGNSVG). Residues 872 to 890 (ALGNLTLVLAIIVFIFAVV) traverse the membrane as a helical segment. At 891–919 (GMQLFGKSYKECVCKISQECKLPRWHMND) the chain is on the extracellular side. A disulfide bridge connects residues cysteine 904 and cysteine 910. The segment at residues 920–940 (FFHSFLIVFRVLCGEWIETMW) is an intramembrane region (pore-forming). Glutamate 934 and glutamate 937 together coordinate Na(+). The Extracellular segment spans residues 941-953 (DCMEVAGQAMCLI). Cysteines 942 and 951 form a disulfide. The chain crosses the membrane as a helical span at residues 954 to 974 (VFMMVMVIGNLVVLNLFLALL). Topologically, residues 975–1197 (LSSFSADNLA…TCFLIVEHNW (223 aa)) are cytoplasmic. The disordered stretch occupies residues 1105–1146 (NLNTEDVSSESDPEGSKDKLDDTSSSEGSTIDIKPEVEEVPV). Residues 1178–1493 (LGKSWWILRK…KKYYNAMKKL (316 aa)) form an III repeat. A helical transmembrane segment spans residues 1198–1215 (FETFIIFMILLSSGALAF). The Extracellular portion of the chain corresponds to 1216–1228 (EDIYIEQRKTIRT). Residues 1229–1247 (ILEYADKVFTYIFILEMLL) form a helical membrane-spanning segment. At 1248 to 1261 (KWTAYGFVKFFTNA) the chain is on the cytoplasmic side. The chain crosses the membrane as a helical span at residues 1262–1280 (WCWLDFLIVAVSLVSLIAN). The Extracellular segment spans residues 1281–1288 (ALGYSELG). Residues 1289–1307 (AIKSLRTLRALRPLRALSR) form a helical membrane-spanning segment. At 1308–1324 (FEGMRVVVNALVGAIPS) the chain is on the cytoplasmic side. The chain crosses the membrane as a helical span at residues 1325-1344 (IMNVLLVCLIFWLIFSIMGV). Residues 1345-1397 (NLFAGKYHYCFNETSEIRFEIDEVNNKTDCEKLMEGNNTEIRWKNVKINFDNV) are Extracellular-facing. Residues cysteine 1354 and cysteine 1374 are joined by a disulfide bond. Asparagine 1356, asparagine 1370, and asparagine 1381 each carry an N-linked (GlcNAc...) asparagine glycan. Positions 1398 to 1419 (GAGYLALLQVATFKGWMDIMYA) form an intramembrane region, pore-forming. Residues 1420 to 1436 (AVDSRKPDEQPDYEGNI) are Extracellular-facing. A helical transmembrane segment spans residues 1437-1458 (YMYIYFVIFIIFGSFFTLNLFI). Over 1459 to 1521 (GVIIDNFNQQ…IVFDFVTQQA (63 aa)) the chain is Cytoplasmic. Serine 1495 is subject to Phosphoserine; by PKC. One copy of the IV repeat lies at 1502 to 1799 (IPRPLNKIQG…WEKFDPDATQ (298 aa)). Residues 1522–1539 (FDIVIMMLICLNMVTMMV) traverse the membrane as a helical segment. At 1540–1550 (ETDTQSKQMEN) the chain is on the extracellular side. The chain crosses the membrane as a helical span at residues 1551 to 1569 (ILYWINLVFVIFFTCECVL). Topologically, residues 1570–1581 (KMFALRHYYFTI) are cytoplasmic. The chain crosses the membrane as a helical span at residues 1582-1599 (GWNIFDFVVVILSIVGMF). The Extracellular portion of the chain corresponds to 1600-1612 (LADIIEKYFVSPT). Residues 1613-1629 (LFRVIRLARIGRILRLI) form a helical membrane-spanning segment. At 1630-1648 (KGAKGIRTLLFALMMSLPA) the chain is on the cytoplasmic side. The helical transmembrane segment at 1649–1666 (LFNIGLLLFLVMFIFSIF) threads the bilayer. Over 1667-1688 (GMSNFAYVKHEAGIDDMFNFET) the chain is Extracellular. Residues 1689–1711 (FGNSMICLFQITTSAGWDGLLLP) constitute an intramembrane region (pore-forming). Residues 1712 to 1740 (ILNRPPDCSLDKEHPGSGFKGDCGNPSVG) are Extracellular-facing. Cysteines 1719 and 1734 form a disulfide. The helical transmembrane segment at 1741-1763 (IFFFVSYIIISFLIVVNMYIAII) threads the bilayer. Over 1764 to 1978 (LENFSVATEE…RQKEVRESKC (215 aa)) the chain is Cytoplasmic. One can recognise an IQ domain in the interval 1893 to 1922 (EEVSAVVLQRAYRGHLARRGFICRKITSNK). The tract at residues 1924–1978 (ENGGTHREKKESTPSTASLPSYDSVTKPDKEKQQRAEEGRRERAKRQKEVRESKC) is disordered. Over residues 1936-1947 (TPSTASLPSYDS) the composition is skewed to polar residues. The span at 1949-1978 (TKPDKEKQQRAEEGRRERAKRQKEVRESKC) shows a compositional bias: basic and acidic residues.

This sequence belongs to the sodium channel (TC 1.A.1.10) family. Nav1.6/SCN8A subfamily. The voltage-sensitive sodium channel consists of an ion-conducting pore-forming alpha subunit regulated by one or more beta-1 (SCN1B), beta-2 (SCN2B), beta-3 (SCN3B) and/or beta-4 (SCN4B) subunits. Beta-1 (SCN1B) and beta-3 (SCN3B) are non-covalently associated with alpha, while beta-2 (SCN2B) and beta-4 (SCN4B) are covalently linked by disulfide bonds. Interacts with FGF13. Interacts with NEDD4 and NEDD4L. Interacts with FGF14, GBG3, GBB2 and SCN1B. Interacts with TMEM233. Interacts with the conotoxin GVIIJ. Interacts with the scorpion toxin BMK M1. Interacts with CALM1; the interaction modulates the inactivation rate of SCN8A. May be ubiquitinated by NEDD4L; which would promote its endocytosis. In terms of processing, phosphorylation at Ser-1495 by PKC in a highly conserved cytoplasmic loop slows inactivation of the sodium channel and reduces peak sodium currents. Expressed in the hippocampus (at protein level). Expressed in brain, cerebellum and spinal cord. As to expression, expressed in non-neuronal tissues, such as monocytes/macrophages.

It localises to the cell membrane. The protein resides in the cell projection. It is found in the axon. Its subcellular location is the cytoplasmic vesicle. The protein localises to the podosome. The catalysed reaction is Na(+)(in) = Na(+)(out). Functionally, pore-forming subunit of a voltage-gated sodium channel complex assuming opened or closed conformations in response to the voltage difference across membranes and through which sodium ions selectively pass along their electrochemical gradient. Contributes to neuronal excitability by regulating action potential threshold and propagation. Its function is as follows. More specifically expressed in non-neuronal cells, could play a role in sodium release from intracellular compartments and participate in the control of podosomes formation and macrophages adhesion and movement. The sequence is that of Sodium channel protein type 8 subunit alpha from Mus musculus (Mouse).